The following is a 146-amino-acid chain: Protein beta (146 aa).

This chain is Protein beta, found in Adelaide River virus (ARV).